Reading from the N-terminus, the 1656-residue chain is Outer membrane protein B (1656 aa).

A propeptide spanning residues Gly1339–Ala1363 is cleaved from the precursor. An Autotransporter domain is found at Val1368–Phe1656.

This sequence belongs to the rickettsiae OmpA/OmpB family.

Its subcellular location is the periplasm. It is found in the secreted. The protein resides in the cell surface. The protein localises to the cell outer membrane. Functionally, the 120 kDa surface-exposed protein is a major structural protein which may play a role as a rickettsial virulence factor and/or immunogen during infection. In terms of biological role, the 32 kDa beta peptide may serve as a membrane anchor. In Rickettsia japonica (strain ATCC VR-1363 / YH), this protein is Outer membrane protein B (ompB).